The chain runs to 151 residues: uncharacterized protein (151 aa).

To B.subtilis pcf and to sigma factors.

This is an uncharacterized protein from Bacillus subtilis (strain 168).